The chain runs to 492 residues: 2,3-bisphosphoglycerate-independent phosphoglycerate mutase (492 aa).

Positions 11 and 61 each coordinate Mn(2+). The active-site Phosphoserine intermediate is Ser-61. Substrate-binding positions include His-118, 147–148 (RD), Arg-178, Arg-184, 248–251 (RNDR), and Lys-320. Mn(2+) is bound by residues Asp-386, His-390, Asp-427, His-428, and His-445.

This sequence belongs to the BPG-independent phosphoglycerate mutase family. In terms of assembly, monomer. It depends on Mn(2+) as a cofactor.

The catalysed reaction is (2R)-2-phosphoglycerate = (2R)-3-phosphoglycerate. It functions in the pathway carbohydrate degradation; glycolysis; pyruvate from D-glyceraldehyde 3-phosphate: step 3/5. Catalyzes the interconversion of 2-phosphoglycerate and 3-phosphoglycerate. This chain is 2,3-bisphosphoglycerate-independent phosphoglycerate mutase, found in Campylobacter jejuni subsp. jejuni serotype O:2 (strain ATCC 700819 / NCTC 11168).